The chain runs to 85 residues: N.vectensis toxin 1 4 (85 aa).

The signal sequence occupies residues 1-20 (MASFKIVIVCLALLVAVASA). Positions 21-36 (RRRDMMSDDELDYHYS) are excised as a propeptide. 3 cysteine pairs are disulfide-bonded: C42–C82, C44–C72, and C65–C83.

The protein belongs to the sea anemone sodium channel inhibitory toxin family. Type II subfamily. In terms of tissue distribution, expressed in ectodermal glands and in clumps outside of the extodermal layer. Is not expressed in nematocytes. In adult female tissues, shows similar expression levels in mesenteries (gametes-producing tissue), tentacles, pharynx and physa.

The protein resides in the secreted. In terms of biological role, binds to site 3 of voltage-gated sodium channels and inhibits the inactivation process. Is highly active on DmNav1/TipE (drosophila) and is only extremely weakly active on rat Nav1.4-beta-1/SCN4A-SCN1B, and on human Nav1.5-beta-1/SCN5A-beta-1. This reveals high specificity for arthropod over mammalian channels. In vivo, when released into the medium, this recombinant toxin induces impaired swimming, paralysis and death of the crustacean A.nauplii within several hours. Also causes paralysis of cherry shrimps immediately after injection at very low doses. Its effect on zebrafish (D.rerio) larvae is also rapid, since it induces tail twitching accompanied by impaired swimming after 20 minutes and complete paralysis within 45 minutes. It has also been observed to cause death of zebrafish larvae within 1 hour. This Nematostella vectensis (Starlet sea anemone) protein is N.vectensis toxin 1 4.